Consider the following 381-residue polypeptide: Alkanesulfonate monooxygenase (381 aa).

It belongs to the SsuD family. In terms of assembly, homotetramer.

It catalyses the reaction an alkanesulfonate + FMNH2 + O2 = an aldehyde + FMN + sulfite + H2O + 2 H(+). Functionally, catalyzes the desulfonation of aliphatic sulfonates. In Cronobacter sakazakii (strain ATCC BAA-894) (Enterobacter sakazakii), this protein is Alkanesulfonate monooxygenase.